Consider the following 157-residue polypeptide: Transcription initiation factor IIA large subunit (157 aa).

The protein belongs to the TFIIA subunit 1 family. In terms of assembly, TFIIA is a heterodimer of the large subunit and the small subunit gamma.

The protein localises to the nucleus. Its function is as follows. TFIIA is a component of the transcription machinery of RNA polymerase II and plays an important role in transcriptional activation. This is Transcription initiation factor IIA large subunit (TOA1) from Encephalitozoon cuniculi (strain GB-M1) (Microsporidian parasite).